Consider the following 32-residue polypeptide: Dermatoxin-J3 (32 aa).

Gln32 is modified (glutamine amide).

Expressed by the skin glands.

The protein localises to the secreted. In terms of biological role, antimicrobial peptide. The protein is Dermatoxin-J3 of Phasmahyla jandaia (Jandaia leaf frog).